We begin with the raw amino-acid sequence, 84 residues long: NADH-ubiquinone oxidoreductase chain 4L (84 aa).

Transmembrane regions (helical) follow at residues 19–39 and 50–70; these read ITLLIAIEILLLTVTLKLIHI and IFSLIIIILAGAESAIGLSIL.

It belongs to the complex I subunit 4L family.

It is found in the mitochondrion membrane. The enzyme catalyses a ubiquinone + NADH + 5 H(+)(in) = a ubiquinol + NAD(+) + 4 H(+)(out). Functionally, core subunit of the mitochondrial membrane respiratory chain NADH dehydrogenase (Complex I) that is believed to belong to the minimal assembly required for catalysis. Complex I functions in the transfer of electrons from NADH to the respiratory chain. The immediate electron acceptor for the enzyme is believed to be ubiquinone. The polypeptide is NADH-ubiquinone oxidoreductase chain 4L (NAD4L) (Candida albicans (strain SC5314 / ATCC MYA-2876) (Yeast)).